We begin with the raw amino-acid sequence, 488 residues long: Bifunctional protein HldE (488 aa).

A ribokinase region spans residues 1–330 (MIDFDGLSNA…RNILPPASLA (330 aa)). Residue 205–208 (NSKE) coordinates ATP. Aspartate 275 is a catalytic residue. The tract at residues 358–488 (FTNGCFDILH…TSLVKRAGGA (131 aa)) is cytidylyltransferase.

The protein in the N-terminal section; belongs to the carbohydrate kinase PfkB family. It in the C-terminal section; belongs to the cytidylyltransferase family. In terms of assembly, homodimer.

It catalyses the reaction D-glycero-beta-D-manno-heptose 7-phosphate + ATP = D-glycero-beta-D-manno-heptose 1,7-bisphosphate + ADP + H(+). It carries out the reaction D-glycero-beta-D-manno-heptose 1-phosphate + ATP + H(+) = ADP-D-glycero-beta-D-manno-heptose + diphosphate. It functions in the pathway nucleotide-sugar biosynthesis; ADP-L-glycero-beta-D-manno-heptose biosynthesis; ADP-L-glycero-beta-D-manno-heptose from D-glycero-beta-D-manno-heptose 7-phosphate: step 1/4. Its pathway is nucleotide-sugar biosynthesis; ADP-L-glycero-beta-D-manno-heptose biosynthesis; ADP-L-glycero-beta-D-manno-heptose from D-glycero-beta-D-manno-heptose 7-phosphate: step 3/4. In terms of biological role, catalyzes the phosphorylation of D-glycero-D-manno-heptose 7-phosphate at the C-1 position to selectively form D-glycero-beta-D-manno-heptose-1,7-bisphosphate. Catalyzes the ADP transfer from ATP to D-glycero-beta-D-manno-heptose 1-phosphate, yielding ADP-D-glycero-beta-D-manno-heptose. The protein is Bifunctional protein HldE of Nitrobacter winogradskyi (strain ATCC 25391 / DSM 10237 / CIP 104748 / NCIMB 11846 / Nb-255).